Here is a 385-residue protein sequence, read N- to C-terminus: DnaJ homolog subfamily C member 28 (385 aa).

Positions 48–132 (EYYRLLNLDE…EGKFKYNTPQ (85 aa)) constitute a J domain. Positions 261-318 (KEIKDTIEQLREALLMSRKKLGNPLSPTEQKQWAQVCEQFQEKIRKLNKRINDFNLIV) form a coiled coil.

In terms of biological role, may have a role in protein folding or as a chaperone. This is DnaJ homolog subfamily C member 28 (Dnajc28) from Mus musculus (Mouse).